Consider the following 656-residue polypeptide: Nuclear elongation and deformation protein 1 (656 aa).

Residues S99 and S103 each carry the phosphoserine modification. Residues S99–E118 are compositionally biased toward polar residues. The disordered stretch occupies residues S99 to D121. At T106 the chain carries Phosphothreonine. Residues S107, S159, and S286 each carry the phosphoserine modification. Disordered regions lie at residues V282 to S328 and S587 to V656. Over residues P291–S300 the composition is skewed to low complexity. S318, S321, and S587 each carry phosphoserine. Residues S318–S328 show a composition bias toward polar residues. The segment covering K596 to K609 has biased composition (low complexity). Residues F640 to V656 are compositionally biased toward acidic residues.

This sequence belongs to the lipin family. In terms of assembly, interacts with dis3, pim1 and nup189.

May have a role in the maintenance of the nuclear envelope structure and in minichromosome stability. This Schizosaccharomyces pombe (strain 972 / ATCC 24843) (Fission yeast) protein is Nuclear elongation and deformation protein 1 (ned1).